A 69-amino-acid polypeptide reads, in one-letter code: Brevinin-1Pb (69 aa).

The N-terminal stretch at 1–20 (MFTLNKFLLLLFFLGTINLS) is a signal peptide. Positions 21–43 (FCEEENAEEERIDEPDETDVEVE) are excised as a propeptide. Residues Cys-63 and Cys-69 are joined by a disulfide bond.

Expressed by the skin glands.

Its subcellular location is the secreted. In terms of biological role, antibacterial activity against Gram-positive bacterium S.aureus and Gram-negative bacterium E.coli. Has activity against C.albicans. This is Brevinin-1Pb from Lithobates pipiens (Northern leopard frog).